The primary structure comprises 86 residues: Large ribosomal subunit protein bL31 (86 aa).

Zn(2+) is bound by residues Cys-16, Cys-18, Cys-38, and Cys-41.

It belongs to the bacterial ribosomal protein bL31 family. Type A subfamily. As to quaternary structure, part of the 50S ribosomal subunit. Requires Zn(2+) as cofactor.

Its function is as follows. Binds the 23S rRNA. The protein is Large ribosomal subunit protein bL31 of Acidothermus cellulolyticus (strain ATCC 43068 / DSM 8971 / 11B).